Here is a 140-residue protein sequence, read N- to C-terminus: MGRISGLVPSRFLTLLAHLVVVITLFWSRESNIQACLPLKFTPEEYEKQDNQLVAALCLTLGLFAVELAGFLSGVSMFNSTQSLLSIAAHCSASVALSFFVFERWECTTYWYIFTFCSAFPAVTETALFIAVFGLKKKPF.

2 consecutive transmembrane segments (helical) span residues 7-27 (LVPS…TLFW) and 53-73 (LVAA…GFLS). Asparagine 79 carries N-linked (GlcNAc...) asparagine glycosylation. The next 2 membrane-spanning stretches (helical) occupy residues 83–103 (SLLS…FVFE) and 113–133 (IFTF…IAVF).

As to quaternary structure, part of the tectonic-like complex (also named B9 complex). Interacts with TMEM237, TMEM231, MKS1 and TMEM216.

Its subcellular location is the membrane. It localises to the cell projection. It is found in the cilium. Its function is as follows. Plays a role in cilia formation and embryonic patterning. Requires for normal Sonic hedgehog (Shh) signaling in the neural tube and acts in combination with GLI2 and GLI3 to pattern ventral and intermediate neuronal cell types. During ciliogenesis regulates the ciliary transition zone localization of some MKS complex proteins. This is Transmembrane protein 107 from Mus musculus (Mouse).